Here is a 134-residue protein sequence, read N- to C-terminus: Small ribosomal subunit protein uS8 (134 aa).

The protein belongs to the universal ribosomal protein uS8 family. As to quaternary structure, part of the 30S ribosomal subunit. Contacts proteins S5 and S12.

Its function is as follows. One of the primary rRNA binding proteins, it binds directly to 16S rRNA central domain where it helps coordinate assembly of the platform of the 30S subunit. The polypeptide is Small ribosomal subunit protein uS8 (Synechococcus sp. (strain JA-3-3Ab) (Cyanobacteria bacterium Yellowstone A-Prime)).